The sequence spans 360 residues: tRNA-specific 2-thiouridylase MnmA (360 aa).

ATP is bound by residues G8 to S15 and M34. The tract at residues N94–D96 is interaction with target base in tRNA. C99 (nucleophile) is an active-site residue. C99 and C195 are joined by a disulfide. Residue G123 participates in ATP binding. The tract at residues K145–Q147 is interaction with tRNA. The Cysteine persulfide intermediate role is filled by C195. The tract at residues R307–Y308 is interaction with tRNA.

Belongs to the MnmA/TRMU family.

It localises to the cytoplasm. It carries out the reaction S-sulfanyl-L-cysteinyl-[protein] + uridine(34) in tRNA + AH2 + ATP = 2-thiouridine(34) in tRNA + L-cysteinyl-[protein] + A + AMP + diphosphate + H(+). Functionally, catalyzes the 2-thiolation of uridine at the wobble position (U34) of tRNA, leading to the formation of s(2)U34. This chain is tRNA-specific 2-thiouridylase MnmA, found in Methylobacillus flagellatus (strain ATCC 51484 / DSM 6875 / VKM B-1610 / KT).